Here is a 101-residue protein sequence, read N- to C-terminus: Small ribosomal subunit protein uS14 (101 aa).

It belongs to the universal ribosomal protein uS14 family. As to quaternary structure, part of the 30S ribosomal subunit. Contacts proteins S3 and S10.

In terms of biological role, binds 16S rRNA, required for the assembly of 30S particles and may also be responsible for determining the conformation of the 16S rRNA at the A site. This Paracoccus denitrificans (strain Pd 1222) protein is Small ribosomal subunit protein uS14.